The chain runs to 101 residues: Small ribosomal subunit protein bS6 (101 aa).

The protein belongs to the bacterial ribosomal protein bS6 family. As to quaternary structure, part of the 30S ribosomal subunit. Forms a tight heterodimer with protein bS18.

Functionally, located on the outer edge of the platform on the body of the 30S subunit. In Thermus thermophilus (strain ATCC BAA-163 / DSM 7039 / HB27), this protein is Small ribosomal subunit protein bS6 (rpsF).